A 2273-amino-acid polypeptide reads, in one-letter code: Acetyl-CoA carboxylase, mitochondrial (2273 aa).

Residues 1–104 (KGKTITHGQS…RGNIHKHTRL (104 aa)) constitute a mitochondrion transit peptide. Residues 134–635 (VISKILIANN…STGWLDDLIL (502 aa)) form the Biotin carboxylation domain. The ATP-grasp domain occupies 292 to 484 (KTNFVSVPDD…LPATQLQIAM (193 aa)). 332–337 (GGGGKG) is a binding site for ATP. Arg-459 is an active-site residue. In terms of domain architecture, Biotinyl-binding spans 763 to 837 (LEAELNPTQV…EAGDVIAKLT (75 aa)). Lys-804 carries the N6-biotinyllysine modification. The CoA carboxyltransferase N-terminal domain maps to 1532–1867 (PYSVKDWLQP…KRDMSPPLLE (336 aa)). The interval 1532–2187 (PYSVKDWLQP…EGQVIKRLQK (656 aa)) is carboxyltransferase. CoA contacts are provided by Arg-1776, Lys-2080, and Arg-2082. Positions 1871–2187 (RWDRDVDFKP…EGQVIKRLQK (317 aa)) constitute a CoA carboxyltransferase C-terminal domain.

Requires biotin as cofactor.

The protein localises to the mitochondrion. The catalysed reaction is hydrogencarbonate + acetyl-CoA + ATP = malonyl-CoA + ADP + phosphate + H(+). It carries out the reaction N(6)-biotinyl-L-lysyl-[protein] + hydrogencarbonate + ATP = N(6)-carboxybiotinyl-L-lysyl-[protein] + ADP + phosphate + H(+). The protein operates within lipid metabolism; malonyl-CoA biosynthesis; malonyl-CoA from acetyl-CoA: step 1/1. Functionally, catalyzes the rate-limiting reaction in the mitochondrial fatty acid synthesis (FAS) type II pathway. Responsible for the production of the mitochondrial malonyl-CoA, used for the biosynthesis of the cofactor lipoic acid. This protein carries three functions: biotin carboxyl carrier protein, biotin carboxylase, and carboxyltransferase. This Saccharomyces cerevisiae (strain ATCC 204508 / S288c) (Baker's yeast) protein is Acetyl-CoA carboxylase, mitochondrial (HFA1).